Consider the following 186-residue polypeptide: MKLKKNDRRVAIKEAIELNPFITDYELCEKFDVSIQTIRLDRTHLNIPELRKRIKLVAEQNYGRIKSIEANEIIGDLIQVNPDVSAQSLIEITIDSVFAKSEIARGHVLFAQANSLCVALIHKPIVLTHESQVEFKEKVKLNDTVRADARVIDITDKHYIIEVNSYVSDMLVFKGKFKMYYTSEDE.

The protein belongs to the FapR family.

Transcriptional factor involved in regulation of membrane lipid biosynthesis by repressing genes involved in fatty acid and phospholipid metabolism. The chain is Transcription factor FapR from Staphylococcus epidermidis (strain ATCC 35984 / DSM 28319 / BCRC 17069 / CCUG 31568 / BM 3577 / RP62A).